The following is a 93-amino-acid chain: MASEKSQNVQDVFLNHVRKSKTPVTVFLVNGVKLQGIITWFDNFSVLLRRDGHTQLVYKHAISTVMPGAPIQLFDATKPEGDLGRDTAAYSDE.

Positions 11 to 71 (DVFLNHVRKS…ISTVMPGAPI (61 aa)) constitute a Sm domain.

It belongs to the Hfq family. In terms of assembly, homohexamer.

In terms of biological role, RNA chaperone that binds small regulatory RNA (sRNAs) and mRNAs to facilitate mRNA translational regulation in response to envelope stress, environmental stress and changes in metabolite concentrations. Also binds with high specificity to tRNAs. The sequence is that of RNA-binding protein Hfq from Granulibacter bethesdensis (strain ATCC BAA-1260 / CGDNIH1).